The sequence spans 436 residues: GTPase Der (436 aa).

2 consecutive EngA-type G domains span residues 4–167 (PTIA…PAQE) and 175–351 (IKFS…ESQN). Residues 10–17 (GRPNVGKS), 57–61 (DTGGI), 119–122 (NKVD), 181–188 (GRPNVGKS), 229–233 (DTAGM), and 294–297 (NKWD) each bind GTP. The 85-residue stretch at 352-436 (TRIPSAVLND…PIHLIARKRK (85 aa)) folds into the KH-like domain.

The protein belongs to the TRAFAC class TrmE-Era-EngA-EngB-Septin-like GTPase superfamily. EngA (Der) GTPase family. Associates with the 50S ribosomal subunit.

GTPase that plays an essential role in the late steps of ribosome biogenesis. In Streptococcus suis (strain 98HAH33), this protein is GTPase Der.